The following is a 120-amino-acid chain: MERTSTSLLFLLSLLIIFASAVNQIRAQTCDENLSSCENCDQRCKAKHGPSSVSKCNGPDGTCGCASFKPAKLCIGATDMCTDKCPTSCCDRQCAIKYKNGKGGCVDYAGYRMCICEYTC.

Residues M1–A27 form the signal peptide. Cystine bridges form between C37-C56, C40-C63, C44-C65, C74-C120, C85-C105, C90-C114, and C94-C116.

The protein belongs to the DEFL family.

It is found in the secreted. The chain is Putative defensin-like protein 179 (LCR57) from Arabidopsis thaliana (Mouse-ear cress).